Reading from the N-terminus, the 274-residue chain is Formamidopyrimidine-DNA glycosylase (274 aa).

The active-site Schiff-base intermediate with DNA is the Pro2. Residue Glu3 is the Proton donor of the active site. The active-site Proton donor; for beta-elimination activity is Lys60. The DNA site is built by His93 and Arg112. The segment at 240 to 274 (FVYGRKGEPCKRCGTPIEKTVVAGRGTHYCPRCQR) adopts an FPG-type zinc-finger fold. Arg264 acts as the Proton donor; for delta-elimination activity in catalysis.

The protein belongs to the FPG family. Monomer. It depends on Zn(2+) as a cofactor.

The enzyme catalyses Hydrolysis of DNA containing ring-opened 7-methylguanine residues, releasing 2,6-diamino-4-hydroxy-5-(N-methyl)formamidopyrimidine.. It carries out the reaction 2'-deoxyribonucleotide-(2'-deoxyribose 5'-phosphate)-2'-deoxyribonucleotide-DNA = a 3'-end 2'-deoxyribonucleotide-(2,3-dehydro-2,3-deoxyribose 5'-phosphate)-DNA + a 5'-end 5'-phospho-2'-deoxyribonucleoside-DNA + H(+). Its function is as follows. Involved in base excision repair of DNA damaged by oxidation or by mutagenic agents. Acts as a DNA glycosylase that recognizes and removes damaged bases. Has a preference for oxidized purines, such as 7,8-dihydro-8-oxoguanine (8-oxoG). Has AP (apurinic/apyrimidinic) lyase activity and introduces nicks in the DNA strand. Cleaves the DNA backbone by beta-delta elimination to generate a single-strand break at the site of the removed base with both 3'- and 5'-phosphates. The sequence is that of Formamidopyrimidine-DNA glycosylase from Geobacillus kaustophilus (strain HTA426).